A 535-amino-acid polypeptide reads, in one-letter code: Peptide chain release factor 3 (535 aa).

The tr-type G domain maps to 8-278; it reads ARRRTFAIIS…VDQAPAPGPR (271 aa). GTP-binding positions include 17–24, 85–89, and 139–142; these read SHPDAGKT, DTPGH, and NKLD.

It belongs to the TRAFAC class translation factor GTPase superfamily. Classic translation factor GTPase family. PrfC subfamily.

It localises to the cytoplasm. Its function is as follows. Increases the formation of ribosomal termination complexes and stimulates activities of RF-1 and RF-2. It binds guanine nucleotides and has strong preference for UGA stop codons. It may interact directly with the ribosome. The stimulation of RF-1 and RF-2 is significantly reduced by GTP and GDP, but not by GMP. This Bordetella bronchiseptica (strain ATCC BAA-588 / NCTC 13252 / RB50) (Alcaligenes bronchisepticus) protein is Peptide chain release factor 3.